The sequence spans 500 residues: Cytosol aminopeptidase (500 aa).

Mn(2+) is bound by residues Lys265 and Asp270. Lys277 is a catalytic residue. Mn(2+) contacts are provided by Asp288, Asp347, and Glu349. Arg351 is an active-site residue.

The protein belongs to the peptidase M17 family. Mn(2+) is required as a cofactor.

It localises to the cytoplasm. The enzyme catalyses Release of an N-terminal amino acid, Xaa-|-Yaa-, in which Xaa is preferably Leu, but may be other amino acids including Pro although not Arg or Lys, and Yaa may be Pro. Amino acid amides and methyl esters are also readily hydrolyzed, but rates on arylamides are exceedingly low.. It carries out the reaction Release of an N-terminal amino acid, preferentially leucine, but not glutamic or aspartic acids.. In terms of biological role, presumably involved in the processing and regular turnover of intracellular proteins. Catalyzes the removal of unsubstituted N-terminal amino acids from various peptides. In Rickettsia prowazekii (strain Madrid E), this protein is Cytosol aminopeptidase (pepA).